The chain runs to 384 residues: Putative odorant receptor 98b (384 aa).

At 1 to 34 (MLTDKFLRLQSALFRLLGLELLHEQDVGHRYPWR) the chain is on the cytoplasmic side. A helical membrane pass occupies residues 35–55 (SICCILSVASFMPLTIAFGLQ). Over 56-66 (NVQNVEQLTDS) the chain is Extracellular. Residues 67 to 87 (LCSVLVDLLALCKIGLFLWLY) traverse the membrane as a helical segment. The Cytoplasmic portion of the chain corresponds to 88–128 (KDFKFLIGQFYCVLQTETHTAVAEMIVTRESRRDQFISAMY). A helical transmembrane segment spans residues 129 to 149 (AYCFITAGLSACLMSPLSMLI). Residues 150-177 (SYQRTGELQPKFPFPSVYPWDNMKLSNY) are Extracellular-facing. Residues 178–198 (IISYFWNVCAALGVALPTVCV) traverse the membrane as a helical segment. Over 199-258 (DTLFCSLSHNLCALFQIARHKMMHFEGRNTKETHENLKHVFQLYALCLNLGHFLNEYFRP) the chain is Cytoplasmic. A helical transmembrane segment spans residues 259–279 (LICQFVAASLHLCVLCYQLSA). The Extracellular portion of the chain corresponds to 280–284 (NILQP). Residues 285–305 (ALLFYAAFTAAVVGQVSIYCF) form a helical membrane-spanning segment. Residues 306–329 (CGSSIHSECQLFGQAIYESSWPHL) lie on the Cytoplasmic side of the membrane. Residues 330-350 (LQENLQLVSSLKIAMMRSSLG) traverse the membrane as a helical segment. The Extracellular portion of the chain corresponds to 351–384 (CPIDGYFFEANRETLITVSKAFIKVSKKTPQVND).

Belongs to the insect chemoreceptor superfamily. Heteromeric odorant receptor channel (TC 1.A.69) family. Or1a subfamily. In terms of assembly, interacts with Orco. Complexes exist early in the endomembrane system in olfactory sensory neurons (OSNs), coupling these complexes to the conserved ciliary trafficking pathway.

The protein localises to the cell membrane. Its function is as follows. Odorant receptor which mediates acceptance or avoidance behavior, depending on its substrates. The odorant receptor repertoire encodes a large collection of odor stimuli that vary widely in identity, intensity, and duration. May form a complex with Orco to form odorant-sensing units, providing sensitive and prolonged odorant signaling and calcium permeability. This Drosophila melanogaster (Fruit fly) protein is Putative odorant receptor 98b (Or98b).